The sequence spans 566 residues: CTP synthase (566 aa).

Residues 1-270 form an amidoligase domain region; sequence MTKFVFVTGG…DGLICDKLRL (270 aa). Ser13 serves as a coordination point for CTP. Ser13 is a UTP binding site. Residues 14 to 19 and Asp71 each bind ATP; that span reads SLGKGI. Mg(2+) is bound by residues Asp71 and Glu144. Residues 151-153, 191-196, and Lys227 contribute to the CTP site; these read DIE and KTKPTQ. UTP is bound by residues 191-196 and Lys227; that span reads KTKPTQ. The Glutamine amidotransferase type-1 domain maps to 295–547; the sequence is SIAMVGKYVD…IAATLEQRSA (253 aa). Gly356 provides a ligand contact to L-glutamine. Catalysis depends on Cys383, which acts as the Nucleophile; for glutamine hydrolysis. L-glutamine is bound by residues 384-387, Glu407, and Arg473; that span reads LGMQ. Catalysis depends on residues His520 and Glu522.

Belongs to the CTP synthase family. In terms of assembly, homotetramer.

It catalyses the reaction UTP + L-glutamine + ATP + H2O = CTP + L-glutamate + ADP + phosphate + 2 H(+). It carries out the reaction L-glutamine + H2O = L-glutamate + NH4(+). The catalysed reaction is UTP + NH4(+) + ATP = CTP + ADP + phosphate + 2 H(+). The protein operates within pyrimidine metabolism; CTP biosynthesis via de novo pathway; CTP from UDP: step 2/2. Its activity is regulated as follows. Allosterically activated by GTP, when glutamine is the substrate; GTP has no effect on the reaction when ammonia is the substrate. The allosteric effector GTP functions by stabilizing the protein conformation that binds the tetrahedral intermediate(s) formed during glutamine hydrolysis. Inhibited by the product CTP, via allosteric rather than competitive inhibition. In terms of biological role, catalyzes the ATP-dependent amination of UTP to CTP with either L-glutamine or ammonia as the source of nitrogen. Regulates intracellular CTP levels through interactions with the four ribonucleotide triphosphates. The protein is CTP synthase of Polaromonas naphthalenivorans (strain CJ2).